The primary structure comprises 499 residues: MASSVFSRFSIYFCVLLLCHGSMAQLFNPSTNPWHSPRQGSFRECRFDRLQAFEPLRKVRSEAGVTEYFDEKNELFQCTGTFVIRRVIQPQGLLVPRYTNIPGVVYIIQGRGSMGLTFPGCPATYQQQFQQFSSQGQSQSQKFRDEHQKIHQFRQGDIVALPAGVAHWFYNDGDAPIVAVYVYDVNNNANQLEPRQKEFLLAGNNNRAQQQQVYGSSIEQHSGQNIFSGFGVEMLSEALGINAVAAKRLQSQNDQRGEIIHVKNGLQLLKPTLTQQQEQAQAQDQYQQVQYSERQQTSSRWNGLEENFCTIKVRVNIENPSRADSYNPRAGRITSVNSQKFPILNLIQMSATRVNLYQNAILSPFWNVNAHSLVYMIQGRSRVQVVSNFGKTVFDGVLRPGQLLIIPQHYAVLKKAEREGCQYIAIKTNANAFVSHLAGKNSVFRALPVDVVANAYRISREQARSLKNNRGEEHGAFTPRFQQQYYPGLSNESESETSE.

An N-terminal signal peptide occupies residues 1-24 (MASSVFSRFSIYFCVLLLCHGSMA). Cystine bridges form between Cys-45-Cys-78 and Cys-121-Cys-309. Cupin type-1 domains lie at 50-247 (LQAF…VAAK) and 315-464 (VNIE…EQAR). A disordered region spans residues 467–499 (KNNRGEEHGAFTPRFQQQYYPGLSNESESETSE).

This sequence belongs to the 11S seed storage protein (globulins) family. In terms of assembly, hexamer; each subunit is composed of an acidic and a basic chain derived from a single precursor and linked by a disulfide bond.

Functionally, seed storage protein. In Oryza sativa subsp. japonica (Rice), this protein is Glutelin type-B 1 (GluB1-A).